The sequence spans 380 residues: Glycogenin-2 (380 aa).

The UDP site is built by Leu10, Tyr16, and Arg95. UDP-alpha-D-glucose is bound by residues Leu10, Tyr16, Arg95, Lys104, Asp120, Ala121, Asp122, Asn158, Thr159, Asp185, Asp188, and Gln189. The UDP site is built by Asp120, Ala121, and Asp122. A Mn(2+)-binding site is contributed by Asp120. Asp122 is a Mn(2+) binding site. 2 O-linked (Glc...) tyrosine glycosylation sites follow: Tyr230 and Tyr232. UDP is bound by residues His249, Gly252, and Lys255. A Mn(2+)-binding site is contributed by His249. The UDP-alpha-D-glucose site is built by Gly252 and Lys255. The segment at 331–357 (SVDRNASQKSTAEKHDIEKPTSKPQSA) is disordered. The span at 341 to 351 (TAEKHDIEKPT) shows a compositional bias: basic and acidic residues. Tyr367 is a glycosylation site (O-linked (Glc...) tyrosine).

The protein belongs to the glycosyltransferase 8 family. Glycogenin subfamily. In terms of assembly, interacts with glycogen synthase GSY2. The cofactor is Mn(2+).

It localises to the cytoplasm. Its subcellular location is the vacuole. It carries out the reaction L-tyrosyl-[glycogenin] + UDP-alpha-D-glucose = alpha-D-glucosyl-L-tyrosyl-[glycogenin] + UDP + H(+). It catalyses the reaction [1,4-alpha-D-glucosyl](n)-L-tyrosyl-[glycogenin] + UDP-alpha-D-glucose = [1,4-alpha-D-glucosyl](n+1)-L-tyrosyl-[glycogenin] + UDP + H(+). Functionally, self-glucosylating initiator of glycogen synthesis. It catalyzes the formation of a short alpha (1,4)-glucosyl chain covalently attached via a glucose 1-O-tyrosyl linkage to internal tyrosine residues and these chains act as primers for the elongation reaction catalyzed by glycogen synthase. Capable of transferring glucosyl residues to unbound acceptors such as free oligoglucans or oligoglucan derivatives. This Saccharomyces cerevisiae (strain YJM789) (Baker's yeast) protein is Glycogenin-2 (GLG2).